Reading from the N-terminus, the 135-residue chain is Transcription antitermination protein NusB (135 aa).

This sequence belongs to the NusB family.

Involved in transcription antitermination. Required for transcription of ribosomal RNA (rRNA) genes. Binds specifically to the boxA antiterminator sequence of the ribosomal RNA (rrn) operons. This chain is Transcription antitermination protein NusB, found in Lacticaseibacillus casei (strain BL23) (Lactobacillus casei).